The sequence spans 595 residues: Phenylalanine--tRNA ligase beta subunit (595 aa).

Residues 86-90 (KLSKP) form a 3'-CCA residue in tRNA region. One can recognise a B5 domain in the interval 292 to 370 (FNDRIMDVSI…VGYGFNNLPK (79 aa)). 4 residues coordinate Mg(2+): aspartate 348, aspartate 354, glutamate 357, and aspartate 358.

Belongs to the phenylalanyl-tRNA synthetase beta subunit family. Type 2 subfamily. As to quaternary structure, tetramer of two alpha and two beta subunits. Mg(2+) serves as cofactor.

The protein localises to the cytoplasm. The enzyme catalyses tRNA(Phe) + L-phenylalanine + ATP = L-phenylalanyl-tRNA(Phe) + AMP + diphosphate + H(+). This is Phenylalanine--tRNA ligase beta subunit (FRS1) from Saccharomyces cerevisiae (strain ATCC 204508 / S288c) (Baker's yeast).